A 446-amino-acid chain; its full sequence is MYQRALLFSALLSVSRAQQAGTAQEEVHPSLTWQRCEASGSCTEVAGSVVLDSNWRWTHSVDGYTNCYTGNEWDATLCPDNESCAQNCAVDGADYEATYGITSNGDSLTLKFVTGSNVGSRVYLMEDDETYQMFDLLNNEFTFDVDVSNLPCGLNGALYFTSMDADGGLSKYEGNTAGAKYGTGYCDSQCPRDIKFINGLGNVEGWEPSDSDANAGVGGMGTCCPEMDIWEANSISTAYTPHPCDSVEQTMCEGDSCGGTYSDDRYGGTCDPDGCDFNSYRMGNTSFYGPGAIIDTSSKFTVVTQFIADGGSLSEIKRFYVQNGEVIPNSESNISGVEGNSITSEFCTAQKTAFGDEDIFAQHGGLSAMGDAASAMVLILSIWDDHHSSMMWLDSSYPTDADPSQPGVARGTCEQGAGDPDVVESEHADASVTFSNIKFGPIGSTF.

The first 17 residues, 1-17 (MYQRALLFSALLSVSRA), serve as a signal peptide directing secretion. An N-linked (GlcNAc...) asparagine glycan is attached at Asn-81. Catalysis depends on Glu-226, which acts as the Nucleophile. Glu-231 serves as the catalytic Proton donor. N-linked (GlcNAc...) asparagine glycans are attached at residues Asn-284 and Asn-333. Residues 399 to 420 (TDADPSQPGVARGTCEQGAGDP) form a disordered region.

The protein belongs to the glycosyl hydrolase 7 (cellulase C) family.

The protein resides in the secreted. The catalysed reaction is Hydrolysis of (1-&gt;4)-beta-D-glucosidic linkages in cellulose and cellotetraose, releasing cellobiose from the non-reducing ends of the chains.. The biological conversion of cellulose to glucose generally requires three types of hydrolytic enzymes: (1) Endoglucanases which cut internal beta-1,4-glucosidic bonds; (2) Exocellobiohydrolases that cut the disaccharide cellobiose from the non-reducing end of the cellulose polymer chain; (3) Beta-1,4-glucosidases which hydrolyze the cellobiose and other short cello-oligosaccharides to glucose. The sequence is that of Probable 1,4-beta-D-glucan cellobiohydrolase A (cbhA) from Emericella nidulans (strain FGSC A4 / ATCC 38163 / CBS 112.46 / NRRL 194 / M139) (Aspergillus nidulans).